The primary structure comprises 231 residues: Enolase-phosphatase E1 (231 aa).

Belongs to the HAD-like hydrolase superfamily. MasA/MtnC family. As to quaternary structure, monomer. It depends on Mg(2+) as a cofactor.

The catalysed reaction is 5-methylsulfanyl-2,3-dioxopentyl phosphate + H2O = 1,2-dihydroxy-5-(methylsulfanyl)pent-1-en-3-one + phosphate. Its pathway is amino-acid biosynthesis; L-methionine biosynthesis via salvage pathway; L-methionine from S-methyl-5-thio-alpha-D-ribose 1-phosphate: step 3/6. It participates in amino-acid biosynthesis; L-methionine biosynthesis via salvage pathway; L-methionine from S-methyl-5-thio-alpha-D-ribose 1-phosphate: step 4/6. Its function is as follows. Bifunctional enzyme that catalyzes the enolization of 2,3-diketo-5-methylthiopentyl-1-phosphate (DK-MTP-1-P) into the intermediate 2-hydroxy-3-keto-5-methylthiopentenyl-1-phosphate (HK-MTPenyl-1-P), which is then dephosphorylated to form the acireductone 1,2-dihydroxy-3-keto-5-methylthiopentene (DHK-MTPene). This is Enolase-phosphatase E1 from Stenotrophomonas maltophilia (strain R551-3).